Consider the following 142-residue polypeptide: Putative FK506-binding protein 9-like protein (142 aa).

The 49-residue stretch at Met1 to Val49 folds into the PPIase FKBP-type domain. EF-hand domains are found at residues Trp60–Ser95 and Asp105–Asp140. Positions 118, 120, 122, 124, and 129 each coordinate Ca(2+).

This is Putative FK506-binding protein 9-like protein (FKBP9P1) from Homo sapiens (Human).